The sequence spans 749 residues: Activating signal cointegrator 1 complex subunit 2 (749 aa).

The tract at residues 1 to 26 is disordered; that stretch reads MPALPLDQLQITHKDPKTGQPKTSAA. At threonine 233 the chain carries Phosphothreonine. The 44-residue stretch at 465–508 folds into the CUE domain; sequence ELDSLISQVKDLLPDLGEGFILACLEHYSYDSEQVINNILEDRL. Disordered stretches follow at residues 606-675 and 689-749; these read EDEY…QDPA and LARK…MIPS. Serine 625 carries the phosphoserine modification. Over residues 649 to 662 the composition is skewed to acidic residues; sequence VQEEEWDEEDEVEE. Basic and acidic residues-rich tracts occupy residues 663–675 and 711–726; these read EAPK…QDPA and QSRE…EANK.

The protein belongs to the ASCC2 family. As to quaternary structure, identified in the ASCC complex that contains ASCC1, ASCC2 and ASCC3. Interacts directly with ASCC3. The ASCC complex interacts with ALKBH3. Interacts (via CUE domain) with 'Lys-63'-linked polyubiquitin chains, but not with 'Lys-48'-linked polyubiquitin chains. Part of the ASC-1 complex, that contains TRIP4, ASCC1, ASCC2 and ASCC3. Component of the RQT (ribosome quality control trigger) complex, that contains ASCC2, ASCC3 and TRIP4. Interacts with CSRP1. Interacts with PRPF8, a component of the spliceosome. Interacts with ZCCHC4.

The protein resides in the nucleus. It is found in the nucleus speckle. Ubiquitin-binding protein involved in DNA repair and rescue of stalled ribosomes. Plays a role in DNA damage repair as component of the ASCC complex. Recruits ASCC3 and ALKBH3 to sites of DNA damage by binding to polyubiquitinated proteins that have 'Lys-63'-linked polyubiquitin chains. Part of the ASC-1 complex that enhances NF-kappa-B, SRF and AP1 transactivation. Involved in activation of the ribosome quality control (RQC) pathway, a pathway that degrades nascent peptide chains during problematic translation. Specifically recognizes and binds RPS20/uS10 ubiquitinated by ZNF598, promoting recruitment of the RQT (ribosome quality control trigger) complex on stalled ribosomes, followed by disassembly of stalled ribosomes. In Mus musculus (Mouse), this protein is Activating signal cointegrator 1 complex subunit 2 (Ascc2).